Consider the following 149-residue polypeptide: Transcriptional repressor NrdR (149 aa).

A zinc finger spans residues 3-34; the sequence is CPFCSATDTKVIDSRLVADGHQVRRRRECAEC. An ATP-cone domain is found at 49–139; sequence PRVVKQDGSR…VYRAFEDVSE (91 aa).

Belongs to the NrdR family. Requires Zn(2+) as cofactor.

Functionally, negatively regulates transcription of bacterial ribonucleotide reductase nrd genes and operons by binding to NrdR-boxes. This Shewanella sediminis (strain HAW-EB3) protein is Transcriptional repressor NrdR.